The following is a 1016-amino-acid chain: Formate dehydrogenase-O major subunit (1016 aa).

The segment at residues 1 to 33 is a signal peptide (tat-type signal); sequence MQVSRRQFFKICAGGMAGTTAAALGFAPSVALA. Residues 43 to 106 enclose the 4Fe-4S Mo/W bis-MGD-type domain; sequence TRETRNTCTY…GLVDFIHSES (64 aa). Cys-50, Cys-53, Cys-57, and Cys-92 together coordinate [4Fe-4S] cluster. A non-standard amino acid (selenocysteine) is located at residue Sec-196.

It belongs to the prokaryotic molybdopterin-containing oxidoreductase family. As to quaternary structure, formate dehydrogenase is a membrane-bound complex, formed by subunits alpha, beta and gamma. The cofactor is Mo-bis(molybdopterin guanine dinucleotide). It depends on [4Fe-4S] cluster as a cofactor. Post-translationally, exported by the Tat system. The position of the signal peptide cleavage has not been experimentally proven.

Its subcellular location is the periplasm. It carries out the reaction formate + NAD(+) = CO2 + NADH. Its function is as follows. Allows to use formate as major electron donor during aerobic respiration. Subunit alpha possibly forms the active site. The polypeptide is Formate dehydrogenase-O major subunit (fdoG) (Escherichia coli (strain K12)).